Reading from the N-terminus, the 351-residue chain is Fe(3+) ions import ATP-binding protein FbpC (351 aa).

The ABC transporter domain occupies 9–239 (LVLKNINKTF…PNSLFLANFM (231 aa)). Residue 41-48 (GPSGCGKT) coordinates ATP.

The protein belongs to the ABC transporter superfamily. Fe(3+) ion importer (TC 3.A.1.10) family. The complex is composed of two ATP-binding proteins (FbpC), two transmembrane proteins (FbpB) and a solute-binding protein (FbpA).

It is found in the cell inner membrane. It catalyses the reaction Fe(3+)(out) + ATP + H2O = Fe(3+)(in) + ADP + phosphate + H(+). Functionally, part of the ABC transporter complex FbpABC involved in Fe(3+) ions import. Responsible for energy coupling to the transport system. The polypeptide is Fe(3+) ions import ATP-binding protein FbpC (Mannheimia succiniciproducens (strain KCTC 0769BP / MBEL55E)).